Reading from the N-terminus, the 1131-residue chain is Probable pre-mRNA-splicing factor ATP-dependent RNA helicase mog-1 (1131 aa).

Basic and acidic residues-rich tracts occupy residues 1 to 12 (MSDKRADGRLEG), 65 to 122 (RGVT…DRSG), 139 to 148 (WDQDDREGSS), 160 to 173 (RGER…DSER), 180 to 225 (RSER…WEEE), and 407 to 416 (GNYKESHQFA). Disordered stretches follow at residues 1-225 (MSDK…WEEE) and 389-416 (MGVK…HQFA). Residues 451-614 (MNVIRENNVV…FGGNCPTFTI (164 aa)) enclose the Helicase ATP-binding domain. 464-471 (GETGSGKT) is a binding site for ATP. Residues 561-564 (DEAH) carry the DEAH box motif. Positions 629-812 (PVEDYVDAAV…NVVLLLKSLG (184 aa)) constitute a Helicase C-terminal domain. 2 stretches are compositionally biased toward basic and acidic residues: residues 1085 to 1114 (EMRE…RRVV) and 1121 to 1131 (ARSERRKLWGL). Positions 1085-1131 (EMREAQKEMERRKEESDKAFKRPESSRRVVEVGSKSARSERRKLWGL) are disordered.

The protein belongs to the DEAD box helicase family. DEAH subfamily. PRP16 sub-subfamily.

It localises to the nucleus. It catalyses the reaction ATP + H2O = ADP + phosphate + H(+). In terms of biological role, probable ATP-binding RNA helicase involved in pre-mRNA splicing. The protein is Probable pre-mRNA-splicing factor ATP-dependent RNA helicase mog-1 (mog-1) of Caenorhabditis elegans.